Here is a 42-residue protein sequence, read N- to C-terminus: Photosystem II reaction center protein J (42 aa).

A helical membrane pass occupies residues 12–32; that stretch reads LWFVGMIVGLAALGLLGIFFY.

It belongs to the PsbJ family. As to quaternary structure, PSII is composed of 1 copy each of membrane proteins PsbA, PsbB, PsbC, PsbD, PsbE, PsbF, PsbH, PsbI, PsbJ, PsbK, PsbL, PsbM, PsbT, PsbX, PsbY, PsbZ, Psb30/Ycf12, at least 3 peripheral proteins of the oxygen-evolving complex and a large number of cofactors. It forms dimeric complexes.

It is found in the plastid. It localises to the chloroplast thylakoid membrane. In terms of biological role, one of the components of the core complex of photosystem II (PSII). PSII is a light-driven water:plastoquinone oxidoreductase that uses light energy to abstract electrons from H(2)O, generating O(2) and a proton gradient subsequently used for ATP formation. It consists of a core antenna complex that captures photons, and an electron transfer chain that converts photonic excitation into a charge separation. The protein is Photosystem II reaction center protein J of Nephroselmis olivacea (Green alga).